The primary structure comprises 242 residues: UPF0173 metal-dependent hydrolase APE_1117 (242 aa).

This sequence belongs to the UPF0173 family.

The polypeptide is UPF0173 metal-dependent hydrolase APE_1117 (Aeropyrum pernix (strain ATCC 700893 / DSM 11879 / JCM 9820 / NBRC 100138 / K1)).